The sequence spans 682 residues: Potassium-transporting ATPase ATP-binding subunit (682 aa).

The next 4 helical transmembrane spans lie at proline 34–alanine 54, alanine 62–alanine 82, isoleucine 219–leucine 239, and valine 254–isoleucine 274. The active-site 4-aspartylphosphate intermediate is aspartate 307. ATP-binding positions include aspartate 344, glutamate 348, phenylalanine 377–serine 384, and lysine 395. Residues aspartate 518 and aspartate 522 each contribute to the Mg(2+) site. 3 helical membrane-spanning segments follow: residues phenylalanine 588–methionine 608, alanine 616–leucine 636, and leucine 662–valine 682.

The protein belongs to the cation transport ATPase (P-type) (TC 3.A.3) family. Type IA subfamily. In terms of assembly, the system is composed of three essential subunits: KdpA, KdpB and KdpC.

The protein resides in the cell inner membrane. It catalyses the reaction K(+)(out) + ATP + H2O = K(+)(in) + ADP + phosphate + H(+). Part of the high-affinity ATP-driven potassium transport (or Kdp) system, which catalyzes the hydrolysis of ATP coupled with the electrogenic transport of potassium into the cytoplasm. This subunit is responsible for energy coupling to the transport system and for the release of the potassium ions to the cytoplasm. The chain is Potassium-transporting ATPase ATP-binding subunit from Escherichia coli O81 (strain ED1a).